The sequence spans 289 residues: tRNA pseudouridine synthase B (289 aa).

Aspartate 38 serves as the catalytic Nucleophile.

Belongs to the pseudouridine synthase TruB family. Type 1 subfamily.

It catalyses the reaction uridine(55) in tRNA = pseudouridine(55) in tRNA. In terms of biological role, responsible for synthesis of pseudouridine from uracil-55 in the psi GC loop of transfer RNAs. The polypeptide is tRNA pseudouridine synthase B (Clostridium novyi (strain NT)).